A 109-amino-acid chain; its full sequence is Cell division protein ZapA (109 aa).

A coiled-coil region spans residues 22–99; it reads EQQDALNMAA…IEQALLEQGR (78 aa).

This sequence belongs to the ZapA family. Type 1 subfamily. As to quaternary structure, homodimer. Interacts with FtsZ.

The protein resides in the cytoplasm. Its function is as follows. Activator of cell division through the inhibition of FtsZ GTPase activity, therefore promoting FtsZ assembly into bundles of protofilaments necessary for the formation of the division Z ring. It is recruited early at mid-cell but it is not essential for cell division. The sequence is that of Cell division protein ZapA from Yersinia pseudotuberculosis serotype O:1b (strain IP 31758).